Here is a 130-residue protein sequence, read N- to C-terminus: Fumarate reductase subunit C (130 aa).

Helical transmembrane passes span 30 to 50 (EGTS…VFSL), 60 to 80 (FVSF…LFAA), and 110 to 130 (IKAL…VALL).

This sequence belongs to the FrdC family. Part of an enzyme complex containing four subunits: a flavoprotein (FrdA), an iron-sulfur protein (FrdB), and two hydrophobic anchor proteins (FrdC and FrdD).

It is found in the cell inner membrane. In terms of biological role, two distinct, membrane-bound, FAD-containing enzymes are responsible for the catalysis of fumarate and succinate interconversion; fumarate reductase is used in anaerobic growth, and succinate dehydrogenase is used in aerobic growth. Anchors the catalytic components of the fumarate reductase complex to the cell inner membrane, binds quinones. In Yersinia pestis bv. Antiqua (strain Angola), this protein is Fumarate reductase subunit C.